Here is an 81-residue protein sequence, read N- to C-terminus: Small ribosomal subunit protein bS16 (81 aa).

Belongs to the bacterial ribosomal protein bS16 family.

The protein is Small ribosomal subunit protein bS16 of Agathobacter rectalis (strain ATCC 33656 / DSM 3377 / JCM 17463 / KCTC 5835 / VPI 0990) (Eubacterium rectale).